Here is a 240-residue protein sequence, read N- to C-terminus: Insulin-like growth factor-binding protein 3 receptor (240 aa).

A signal peptide spans 1–38; sequence MGSCQAGHNLHLCLAHHPPLVCATLILLLLGLSGLGLG. The Extracellular segment spans residues 39–204; the sequence is GFLLTHTTGL…SEELALCGSR (166 aa). Residue asparagine 167 is glycosylated (N-linked (GlcNAc...) asparagine). Residues 205–225 traverse the membrane as a helical segment; that stretch reads VLGLGFFLVLLCGLLCCTTAV. At 226-240 the chain is on the cytoplasmic side; the sequence is CFHPRPEFHWSRTRL.

In terms of assembly, interacts with IGFBP3. Interacts with CASP8.

It is found in the cell membrane. Its function is as follows. Cell death receptor specific for IGFBP3, may mediate caspase-8-dependent apoptosis upon ligand binding. The chain is Insulin-like growth factor-binding protein 3 receptor (Tmem219) from Mus musculus (Mouse).